Here is a 256-residue protein sequence, read N- to C-terminus: Non-structural protein 1 (256 aa).

It localises to the host cytoplasm. Its subcellular location is the host perinuclear region. Plays a role in inhibition of the host innate immune system by counteracting the type I interferon signaling. The protein is Non-structural protein 1 of Infectious salmon anemia virus (isolate Atlantic salmon/Norway/810/9/99) (ISAV).